A 322-amino-acid polypeptide reads, in one-letter code: Acetylglutamate kinase (322 aa).

Residues 89-90 (GG), Arg-111, and Asn-217 contribute to the substrate site.

This sequence belongs to the acetylglutamate kinase family. ArgB subfamily.

The protein resides in the cytoplasm. It catalyses the reaction N-acetyl-L-glutamate + ATP = N-acetyl-L-glutamyl 5-phosphate + ADP. It functions in the pathway amino-acid biosynthesis; L-arginine biosynthesis; N(2)-acetyl-L-ornithine from L-glutamate: step 2/4. Its function is as follows. Catalyzes the ATP-dependent phosphorylation of N-acetyl-L-glutamate. The protein is Acetylglutamate kinase of Ehrlichia ruminantium (strain Welgevonden).